Consider the following 61-residue polypeptide: Alpha-conotoxin-like Sm1.1 (61 aa).

The N-terminal stretch at 1-16 is a signal peptide; it reads MFTVFLLVVLATTVVS. The propeptide occupies 17–43; that stretch reads FPSDRASDGRDDEAKDERSDMHESGRK. A disordered region spans residues 19–46; sequence SDRASDGRDDEAKDERSDMHESGRKGRG. Residues 21 to 42 are compositionally biased toward basic and acidic residues; that stretch reads RASDGRDDEAKDERSDMHESGR. 2 disulfide bridges follow: C48–C53 and C49–C59. A 4-hydroxyproline; partial modification is found at P55. At C59 the chain carries Cysteine amide.

The protein belongs to the conotoxin A superfamily. Expressed by the venom duct.

Its subcellular location is the secreted. Its function is as follows. Alpha-conotoxins act on postsynaptic membranes, they bind to the nicotinic acetylcholine receptors (nAChR) and thus inhibit them. The protein is Alpha-conotoxin-like Sm1.1 of Conus stercusmuscarum (Fly-specked cone).